A 1858-amino-acid chain; its full sequence is Protein ROS1C (1858 aa).

Residues 347–356 (TEALKGEDAP) show a composition bias toward basic and acidic residues. Disordered regions lie at residues 347–416 (TEAL…AEPF) and 1288–1309 (PDTAAQASKPKKSRTTSKKNSE). 2 stretches are compositionally biased toward basic residues: residues 360-370 (LKTRRRKHRPK) and 394-404 (KPKRKYVRKNR). 4 residues coordinate [4Fe-4S] cluster: C1492, C1499, C1502, and C1508.

It belongs to the DNA glycosylase family. DEMETER subfamily. [4Fe-4S] cluster serves as cofactor. In terms of tissue distribution, expressed in pistils and immature seeds. Expressed a low levels in roots, leaves and anthers.

The protein resides in the nucleus. Functionally, bifunctional DNA glycosylase/lyase, which excises 5-methylcytosine (5-meC) and 5-hydroxymethylcytosine (5-hmeC), leaving an apyrimidinic (AP) site that is subsequently incised by the lyase activity. Is responsible for the demethylation of methylated cytosine residues of Tos17 retrotransposon DNA. Demethylation of Tos17 cytosine residues promotes its transposition. May be involved in seed development. This chain is Protein ROS1C, found in Oryza sativa subsp. japonica (Rice).